Here is a 139-residue protein sequence, read N- to C-terminus: Large ribosomal subunit protein uL16 (139 aa).

Positions 1–17 (MLIPRKVKHRKQHHPGR) are enriched in basic residues. The disordered stretch occupies residues 1-24 (MLIPRKVKHRKQHHPGRTGHATGG).

This sequence belongs to the universal ribosomal protein uL16 family. As to quaternary structure, part of the 50S ribosomal subunit.

In terms of biological role, binds 23S rRNA and is also seen to make contacts with the A and possibly P site tRNAs. The polypeptide is Large ribosomal subunit protein uL16 (Clavibacter michiganensis subsp. michiganensis (strain NCPPB 382)).